Reading from the N-terminus, the 199-residue chain is uncharacterized protein (199 aa).

The helical transmembrane segment at Ala-17–Ile-37 threads the bilayer.

The protein resides in the membrane. This is an uncharacterized protein from Homo sapiens (Human).